Reading from the N-terminus, the 491-residue chain is Delayed-rectifier potassium channel regulatory subunit KCNS3 (491 aa).

The Cytoplasmic portion of the chain corresponds to 1 to 182 (MVFGEFFHRP…IRMENPAYCL (182 aa)). Residues 183 to 204 (SAKLIAISSLSVVLASIVAMCV) traverse the membrane as a helical segment. At 205–220 (HSMSEFQNEDGEVDDP) the chain is on the extracellular side. The helical transmembrane segment at 221–243 (VLEGVEIACIAWFTGELAIRLVA) threads the bilayer. Residues 244–254 (APSQKKFWKNP) are Cytoplasmic-facing. The chain crosses the membrane as a helical span at residues 255–275 (LNIIDFVSIIPFYATLAVDTK). Topologically, residues 276-285 (EEESEDIENM) are extracellular. A helical; Voltage-sensor membrane pass occupies residues 286–306 (GKVVQILRLMRIFRILKLARH). The Cytoplasmic portion of the chain corresponds to 307–321 (SVGLRSLGATLRHSY). A helical membrane pass occupies residues 322-343 (HEVGLLLLFLSVGISIFSVLIY). Residues 344–357 (SVEKDEHKSSLTSI) lie on the Extracellular side of the membrane. Residues 358–369 (PICWWWATISMT) constitute an intramembrane region (helical). The short motif at 370–375 (TVGYGD) is the Selectivity filter element. The stretch at 370-377 (TVGYGDTH) is an intramembrane region. Over 378 to 384 (PVTLAGK) the chain is Extracellular. A helical transmembrane segment spans residues 385–413 (IIASTCIICGILVVALPITIIFNKFSKYY). The Cytoplasmic portion of the chain corresponds to 414–491 (QKQKDMEVDQ…TASLENCTGK (78 aa)).

The protein belongs to the potassium channel family. S (TC 1.A.1.2) subfamily. Kv9.3/KCNS3 sub-subfamily. As to quaternary structure, heterotetramer with KCNB1. Does not form homomultimers.

It localises to the cell membrane. Functionally, potassium channel regulatory subunit that modulates the delayed rectifier potassium channel activity of KCNB1 by namely slowing down the deactivation and inactivation time constants. While it does not form functional channel on its own, it can form functional heterotetrameric channels with KCNB1. The chain is Delayed-rectifier potassium channel regulatory subunit KCNS3 from Mus musculus (Mouse).